Consider the following 403-residue polypeptide: Prostaglandin D2 receptor 2 (403 aa).

Residues 1–34 lie on the Extracellular side of the membrane; it reads MANITLKPLCPLLEEMVQLPNHSNSSLRYIDHVS. Residues Asn3, Asn21, and Asn24 are each glycosylated (N-linked (GlcNAc...) asparagine). The helical transmembrane segment at 35–55 threads the bilayer; the sequence is VLLHGLASLLGLVENGLILFV. Over 56 to 71 the chain is Cytoplasmic; that stretch reads VGCRMRQTVVTTWVLH. A helical membrane pass occupies residues 72–92; it reads LALSDLLAAASLPFFTYFLAV. Over 93–104 the chain is Extracellular; that stretch reads GHSWELGTTFCK. A disulfide bridge connects residues Cys103 and Cys198. Residues 105-125 traverse the membrane as a helical segment; it reads LHSSVFFLNMFASGFLLSAIS. Topologically, residues 126 to 147 are cytoplasmic; the sequence is LDRCLQVVRPVWAQNHRTVAAA. A helical membrane pass occupies residues 148-168; that stretch reads HRVCLMLWALAVLNTVPYFVF. The Extracellular segment spans residues 169-209; sequence RDTIPRRDGRIMCYYNMLLLNPGSDRDTTCDYRQKALAVSK. A helical transmembrane segment spans residues 210-230; the sequence is FLLAFMVPLAIIASSHVAVSL. Over 231–245 the chain is Cytoplasmic; the sequence is QLHHRGRQRTGRFVR. A helical membrane pass occupies residues 246-266; the sequence is LVAAIVVAFILCWGPYHIFSL. At 267–284 the chain is on the extracellular side; sequence LEARAHSVTTLRQLASRG. Residues 285–305 traverse the membrane as a helical segment; sequence LPFVTSLAFFNSVVNPLLYVL. The Cytoplasmic portion of the chain corresponds to 306–403; sequence TCPDMLHKLR…KQGSLSCTLD (98 aa). The Involved in the recycling of CRTH2 signature appears at 329-332; the sequence is DSDL. At Ser330 the chain carries Phosphoserine. Disordered regions lie at residues 332–353 and 384–403; these read LSTG…STTT and PRRV…CTLD. Residues 338–348 are compositionally biased toward basic residues; that stretch reads KRCRRRHRRRA. Ser349 carries the phosphoserine modification. Over residues 393–403 the composition is skewed to polar residues; the sequence is EKQGSLSCTLD.

It belongs to the G-protein coupled receptor 1 family. Phosphorylated.

The protein resides in the cell membrane. Functionally, receptor for prostaglandin D2 (PGD2). Coupled to the G(i)-protein. Receptor activation may result in pertussis toxin-sensitive decreases in cAMP levels and Ca(2+) mobilization. PI3K signaling is also implicated in mediating PTGDR2 effects. PGD2 induced receptor internalization. CRTH2 internalization can be regulated by diverse kinases such as, PKC, PKA, GRK2, GPRK5/GRK5 and GRK6. Receptor activation is responsible, at least in part, in immune regulation and allergic/inflammation responses. In Rattus norvegicus (Rat), this protein is Prostaglandin D2 receptor 2 (Ptgdr2).